An 86-amino-acid chain; its full sequence is MNLRKILLSSALSLGMLVSAAPVLATSSSSEVIVKSDEYDYDTIYQLSPLPNFKPSIEYNGYTYTLTRYYFDYSIQFYTAIYTKVV.

A signal peptide spans 1–25; the sequence is MNLRKILLSSALSLGMLVSAAPVLA.

This is an uncharacterized protein from Bacillus subtilis (strain 168).